Consider the following 779-residue polypeptide: Chloride channel protein CLC-c (779 aa).

Ser27 is subject to Phosphoserine. Helical transmembrane passes span 92 to 112 (TFLKWALAFLIGLATGLVGFL), 142 to 162 (FAFAGCNLILATAAASLCAFI), 190 to 210 (STLFVKIFGSIFGVAAGFVVG), 215 to 235 (MVHTGACIANLLGQGGSKKYR), 257 to 277 (GAAAGVAAAFRAPVGGVLFAL), 287 to 307 (ALLWRTFFTTAVVAVVLRSLI), 341 to 361 (LAIVFLGVIGGVLGSLYNYLV), 380 to 400 (IMLVMAVSILSSCCAFGLPWL), 466 to 486 (LAIFFVAVYCLGIITYGIAIP), 488 to 508 (GLFIPVILAGASYGRLVGRLL), 520 to 540 (SLLGAASFLGGTMRMTVSLCV), and 541 to 561 (ILLELTNNLLMLPLVMLVLLI). In terms of domain architecture, CBS 1 spans 601–659 (DVVSGALISFSRVEKVGVIWQALKMTRHNGFPVIDEPPFTEASELCGIALRSHLLVLLQ). Phosphoserine is present on Ser672. A CBS 2 domain is found at 713–777 (ITNTSPYTVL…VLGLYPHIDP (65 aa)). Residues 741–761 (HLCVVPKTPGRPPIVGILTRH) traverse the membrane as a helical segment.

The protein belongs to the chloride channel (TC 2.A.49) family. Homodimer. Interacts with PP2A5. In terms of tissue distribution, broadly expressed in the plant.

The protein localises to the membrane. Voltage-gated chloride channel. The protein is Chloride channel protein CLC-c (CLC-C) of Arabidopsis thaliana (Mouse-ear cress).